Here is a 153-residue protein sequence, read N- to C-terminus: Ribosome-binding factor A (153 aa).

The disordered stretch occupies residues 116–153 (DAQVAEQAQGAQYAAGEDAYRTPSDEDDAEGPESAPRV). Low complexity predominate over residues 119 to 132 (VAEQAQGAQYAAGE).

The protein belongs to the RbfA family. Monomer. Binds 30S ribosomal subunits, but not 50S ribosomal subunits or 70S ribosomes.

It is found in the cytoplasm. In terms of biological role, one of several proteins that assist in the late maturation steps of the functional core of the 30S ribosomal subunit. Associates with free 30S ribosomal subunits (but not with 30S subunits that are part of 70S ribosomes or polysomes). Required for efficient processing of 16S rRNA. May interact with the 5'-terminal helix region of 16S rRNA. The chain is Ribosome-binding factor A from Kocuria rhizophila (strain ATCC 9341 / DSM 348 / NBRC 103217 / DC2201).